The primary structure comprises 275 residues: Translation initiation factor 2 subunit alpha (275 aa).

The region spanning 12–83 (GEFVIATVKS…NKGHIDLSLK (72 aa)) is the S1 motif domain.

Belongs to the eIF-2-alpha family. In terms of assembly, heterotrimer composed of an alpha, a beta and a gamma chain.

In terms of biological role, eIF-2 functions in the early steps of protein synthesis by forming a ternary complex with GTP and initiator tRNA. The protein is Translation initiation factor 2 subunit alpha of Thermococcus onnurineus (strain NA1).